A 202-amino-acid chain; its full sequence is NADH-quinone oxidoreductase subunit B 2 (202 aa).

Positions 38, 39, 104, and 133 each coordinate [4Fe-4S] cluster.

Belongs to the complex I 20 kDa subunit family. As to quaternary structure, NDH-1 is composed of 14 different subunits. Subunits NuoB, C, D, E, F, and G constitute the peripheral sector of the complex. Requires [4Fe-4S] cluster as cofactor.

It is found in the cell inner membrane. It carries out the reaction a quinone + NADH + 5 H(+)(in) = a quinol + NAD(+) + 4 H(+)(out). In terms of biological role, NDH-1 shuttles electrons from NADH, via FMN and iron-sulfur (Fe-S) centers, to quinones in the respiratory chain. The immediate electron acceptor for the enzyme in this species is believed to be ubiquinone. Couples the redox reaction to proton translocation (for every two electrons transferred, four hydrogen ions are translocated across the cytoplasmic membrane), and thus conserves the redox energy in a proton gradient. This Koribacter versatilis (strain Ellin345) protein is NADH-quinone oxidoreductase subunit B 2.